The primary structure comprises 350 residues: MKTQLEGDRVLAGKEAVAELYKTGYFGRPREDGLELSLVEAAYLQFRGKIEIELEGRKLDFRALFEQASLRQPNFELKYIVYKDLKERGYYVQPSAADFRVYPRGSHPGKSAAKIFVHVLSERQPLPVKLLQDSVISAENVHKQFILAVVDEESDLTFYEIKTASPQGEMPEPYPEVKTDATFLEDRVIAWDAEASGALYAGGFYGKMLDPERLQLSLVESLYLFSRGIIVVRDRKDRIFSFDEFVEKASEIESSFLRKYGAYKALRDSGHVVKTGFKFGTHFRVYRKVESIEKIPHSEYLVNVIPSDYEFRLPVMSGAVRLANSVRKRMLFAVEKEEGVEYLDISRVKM.

Catalysis depends on residues Tyr-286, His-297, and Lys-328.

It belongs to the tRNA-intron endonuclease family. Archaeal long subfamily. Homodimer.

It catalyses the reaction pretRNA = a 3'-half-tRNA molecule with a 5'-OH end + a 5'-half-tRNA molecule with a 2',3'-cyclic phosphate end + an intron with a 2',3'-cyclic phosphate and a 5'-hydroxyl terminus.. Its function is as follows. Endonuclease that removes tRNA introns. Cleaves pre-tRNA at the 5'- and 3'-splice sites to release the intron. The products are an intron and two tRNA half-molecules bearing 2',3' cyclic phosphate and 5'-OH termini. Recognizes a pseudosymmetric substrate in which 2 bulged loops of 3 bases are separated by a stem of 4 bp. This is tRNA-splicing endonuclease from Methanosarcina acetivorans (strain ATCC 35395 / DSM 2834 / JCM 12185 / C2A).